Consider the following 171-residue polypeptide: Der GTPase-activating protein YihI (171 aa).

Disordered regions lie at residues 1 to 99 (MKKP…QAEL) and 145 to 171 (LSYD…RGGN). Residues 20–30 (TREELNQEARD) are compositionally biased toward basic and acidic residues. The span at 31 to 40 (RKRLKKHRGH) shows a compositional bias: basic residues. Over residues 147–160 (YDDDDEDDEEDEKQ) the composition is skewed to acidic residues.

Belongs to the YihI family. Interacts with Der.

In terms of biological role, a GTPase-activating protein (GAP) that modifies Der/EngA GTPase function. May play a role in ribosome biogenesis. The polypeptide is Der GTPase-activating protein YihI (Salmonella choleraesuis (strain SC-B67)).